Consider the following 185-residue polypeptide: Ribosome-recycling factor (185 aa).

Residues 131–155 (DRKNANDKIKKSEKDKEITADESKS) are compositionally biased toward basic and acidic residues. The disordered stretch occupies residues 131–156 (DRKNANDKIKKSEKDKEITADESKSA).

The protein belongs to the RRF family.

The protein localises to the cytoplasm. In terms of biological role, responsible for the release of ribosomes from messenger RNA at the termination of protein biosynthesis. May increase the efficiency of translation by recycling ribosomes from one round of translation to another. The polypeptide is Ribosome-recycling factor (Sulfurimonas denitrificans (strain ATCC 33889 / DSM 1251) (Thiomicrospira denitrificans (strain ATCC 33889 / DSM 1251))).